Consider the following 59-residue polypeptide: Crassipeptide cce9a (59 aa).

Residues 1-30 (ADNHARVAGPRAVASGRYATEKAFLQMMTR) constitute a propeptide that is removed on maturation.

Post-translationally, contains 3 disulfide bonds. In terms of tissue distribution, expressed by the venom duct.

The protein localises to the secreted. Functionally, crassispirid snail peptide that induces sleep-like symptoms in young mice (12 and 14 days) and hyperactivity in older mice (16 days), when intracranially injected. This Crassispira cerithina (Sea snail) protein is Crassipeptide cce9a.